We begin with the raw amino-acid sequence, 330 residues long: Probable pectinesterase 55 (330 aa).

Residues 1–24 (MGTHRIILGLAALCCFCLPHLIEA) form the signal peptide. 2 N-linked (GlcNAc...) asparagine glycosylation sites follow: N38 and N52. The active-site Proton donor is D161. D182 serves as the catalytic Nucleophile. Positions 243 and 245 each coordinate substrate. N-linked (GlcNAc...) asparagine glycosylation is found at N257 and N292.

It belongs to the pectinesterase family.

The protein resides in the secreted. It is found in the cell wall. The enzyme catalyses [(1-&gt;4)-alpha-D-galacturonosyl methyl ester](n) + n H2O = [(1-&gt;4)-alpha-D-galacturonosyl](n) + n methanol + n H(+). Its pathway is glycan metabolism; pectin degradation; 2-dehydro-3-deoxy-D-gluconate from pectin: step 1/5. Its function is as follows. Acts in the modification of cell walls via demethylesterification of cell wall pectin. The chain is Probable pectinesterase 55 (PME55) from Arabidopsis thaliana (Mouse-ear cress).